Consider the following 312-residue polypeptide: MDVLDYLDMSESSEKFHVSVLSEKDKFKIESADITLKEGDDFKRISTIRNIFDRKNVIFYGKYLSESFVKLETASGKFELPIVNIDHIYDQISKIRNQEKRKTLSCIHISTIQIVLKSTFLKGLDYPISLAITDERINNPKEKIIGIVHGNLATVTLKFSVHLGFAIPLTEEDLSRSISLTYKAYRNDLMNDQKQGFSITYAVSYALANSHHSIQFANKDRIYLDEIFKQVSFTEKPRPISPIKPNGLKFLKKKPSNLEDLIGVPRNHLSLQPPPLRVARKDSEESSSTSVPEIENLTKQVKDISSYLKDRL.

A disordered region spans residues 266 to 293 (RNHLSLQPPPLRVARKDSEESSSTSVPE). Residues 278–307 (VARKDSEESSSTSVPEIENLTKQVKDISSY) adopt a coiled-coil conformation.

Belongs to the caulimoviridae movement protein family. In terms of assembly, homotrimer, through the coiled-coil domain. Interacts with VAP.

The protein localises to the host cell junction. It is found in the host plasmodesma. Its function is as follows. Transports viral genome to neighboring plant cells directly through plasmosdesmata, without any budding. The movement protein allows efficient cell to cell propagation, by bypassing the host cell wall barrier. Acts by forming tubules structures that increase the size exclusion limit (SEL) of plasmodesmata, thereby allowing viral ribonucleocapsids to spread directly to neighboring cells. This Cestrum parqui (CmYLCV) protein is Putative movement protein.